Reading from the N-terminus, the 80-residue chain is Conotoxin PnMKLT1-0121 (80 aa).

The first 22 residues, 1–22 (MKLTCMMIVAVLFLTAWTFATA), serve as a signal peptide directing secretion. A propeptide spanning residues 23–49 (DDPRNRLENFFSKTQHEMKNPEASKLN) is cleaved from the precursor. 3 disulfide bridges follow: C52-C67, C59-C71, and C66-C75.

Belongs to the conotoxin O1 superfamily. Expressed by the venom duct.

Its subcellular location is the secreted. This chain is Conotoxin PnMKLT1-0121, found in Conus pennaceus (Feathered cone).